Consider the following 421-residue polypeptide: eIF5-mimic protein 1 (421 aa).

Residues 1 to 24 are disordered; sequence MNTGKQQKPVLTGQRFKTRKRDEK. Residues 250–417 enclose the W2 domain; sequence TQQTLGTRKE…QNAEEESESE (168 aa).

The protein belongs to the BZW family.

The protein resides in the cytoplasm. Functionally, translation initiation regulator which may repress non-AUG initiated translation and repeat-associated non-AUG (RAN) initiated translation by acting as a competitive inhibitor of eukaryotic translation initiation factor 5 (EIF5) function. This chain is eIF5-mimic protein 1 (bzw2), found in Danio rerio (Zebrafish).